The sequence spans 338 residues: Aspartate--ammonia ligase (338 aa).

The protein belongs to the class-II aminoacyl-tRNA synthetase family. AsnA subfamily.

Its subcellular location is the cytoplasm. The catalysed reaction is L-aspartate + NH4(+) + ATP = L-asparagine + AMP + diphosphate + H(+). Its pathway is amino-acid biosynthesis; L-asparagine biosynthesis; L-asparagine from L-aspartate (ammonia route): step 1/1. This is Aspartate--ammonia ligase from Lactobacillus delbrueckii subsp. bulgaricus (strain ATCC 11842 / DSM 20081 / BCRC 10696 / JCM 1002 / NBRC 13953 / NCIMB 11778 / NCTC 12712 / WDCM 00102 / Lb 14).